Consider the following 136-residue polypeptide: Ribosome-binding factor A (136 aa).

Residues 114–136 (DRANRPGPAADEPDEPDEPEDRR) form a disordered region. The segment covering 124–136 (DEPDEPDEPEDRR) has biased composition (acidic residues).

Belongs to the RbfA family. Monomer. Binds 30S ribosomal subunits, but not 50S ribosomal subunits or 70S ribosomes.

The protein localises to the cytoplasm. In terms of biological role, one of several proteins that assist in the late maturation steps of the functional core of the 30S ribosomal subunit. Associates with free 30S ribosomal subunits (but not with 30S subunits that are part of 70S ribosomes or polysomes). Required for efficient processing of 16S rRNA. May interact with the 5'-terminal helix region of 16S rRNA. The protein is Ribosome-binding factor A of Bordetella petrii (strain ATCC BAA-461 / DSM 12804 / CCUG 43448).